Consider the following 279-residue polypeptide: NLP effector protein 9 (279 aa).

An N-terminal signal peptide occupies residues Met1–Gly19. The short motif at Ala151–Ile161 is the Conserved undecapeptide motif element. Asn176 carries N-linked (GlcNAc...) asparagine glycosylation.

It belongs to the Necrosis inducing protein (NPP1) family.

The protein localises to the secreted. Its function is as follows. Secreted effector that acts as a pathogen-associated molecular pattern (PAMP) recognized by the plant immune system. Seems not to induce necrosis in Nicotiana benthamiana leaves. The chain is NLP effector protein 9 from Plasmopara viticola (Downy mildew of grapevine).